A 128-amino-acid polypeptide reads, in one-letter code: Small ribosomal subunit protein uS11 (128 aa).

It belongs to the universal ribosomal protein uS11 family. As to quaternary structure, part of the 30S ribosomal subunit. Interacts with proteins S7 and S18. Binds to IF-3.

In terms of biological role, located on the platform of the 30S subunit, it bridges several disparate RNA helices of the 16S rRNA. Forms part of the Shine-Dalgarno cleft in the 70S ribosome. This is Small ribosomal subunit protein uS11 from Wolbachia pipientis subsp. Culex pipiens (strain wPip).